Reading from the N-terminus, the 190-residue chain is Probable chorismate pyruvate-lyase (190 aa).

Positions 77, 115, and 174 each coordinate substrate.

This sequence belongs to the UbiC family.

The protein localises to the cytoplasm. It catalyses the reaction chorismate = 4-hydroxybenzoate + pyruvate. The protein operates within cofactor biosynthesis; ubiquinone biosynthesis. Removes the pyruvyl group from chorismate, with concomitant aromatization of the ring, to provide 4-hydroxybenzoate (4HB) for the ubiquinone pathway. This chain is Probable chorismate pyruvate-lyase, found in Shewanella sp. (strain MR-4).